Here is a 295-residue protein sequence, read N- to C-terminus: Sulfotransferase 1A1 (295 aa).

Residue 48–53 (KSGTTW) participates in 3'-phosphoadenylyl sulfate binding. Position 106–108 (106–108 (KTH)) interacts with substrate. The active-site Proton acceptor is H108. Residues R130, S138, Y193, 227–232 (TSFKEM), and 255–259 (FMRKG) each bind 3'-phosphoadenylyl sulfate. At S138 the chain carries Phosphoserine.

It belongs to the sulfotransferase 1 family. As to quaternary structure, homodimer. As to expression, liver, lung, adrenal, brain, platelets and skin.

It is found in the cytoplasm. It carries out the reaction a phenol + 3'-phosphoadenylyl sulfate = an aryl sulfate + adenosine 3',5'-bisphosphate + H(+). The enzyme catalyses 17beta-estradiol + 3'-phosphoadenylyl sulfate = 17beta-estradiol 3-sulfate + adenosine 3',5'-bisphosphate + H(+). The catalysed reaction is 4-ethylphenol + 3'-phosphoadenylyl sulfate = 4-ethylphenyl sulfate + adenosine 3',5'-bisphosphate + H(+). It catalyses the reaction 4-nitrophenol + 3'-phosphoadenylyl sulfate = 4-nitrophenyl sulfate + adenosine 3',5'-bisphosphate. It carries out the reaction dopamine + 3'-phosphoadenylyl sulfate = dopamine 3-O-sulfate + adenosine 3',5'-bisphosphate + H(+). The enzyme catalyses dopamine + 3'-phosphoadenylyl sulfate = dopamine 4-O-sulfate + adenosine 3',5'-bisphosphate + H(+). The catalysed reaction is 3,3',5-triiodo-L-thyronine + 3'-phosphoadenylyl sulfate = 3,3',5-triiodo-L-thyronine sulfate + adenosine 3',5'-bisphosphate + H(+). It catalyses the reaction 3,3',5'-triiodo-L-thyronine + 3'-phosphoadenylyl sulfate = 3,3',5'-triiodo-L-thyronine sulfate + adenosine 3',5'-bisphosphate + H(+). It carries out the reaction 3,3'-diiodo-L-thyronine + 3'-phosphoadenylyl sulfate = 3,3'-diiodo-L-thyronine sulfate + adenosine 3',5'-bisphosphate + H(+). The enzyme catalyses L-thyroxine + 3'-phosphoadenylyl sulfate = L-thyroxine sulfate + adenosine 3',5'-bisphosphate + H(+). Its function is as follows. Sulfotransferase that utilizes 3'-phospho-5'-adenylyl sulfate (PAPS) as sulfonate donor to catalyze the sulfate conjugation of a wide variety of acceptor molecules bearing a hydroxyl or an amine group. Sulfonation increases the water solubility of most compounds, and therefore their renal excretion, but it can also result in bioactivation to form active metabolites. Displays broad substrate specificity for small phenolic compounds. Plays an important role in the sulfonation of endogenous molecules such as steroid hormones. Mediates the sulfate conjugation of a variety of xenobiotics, including the drugs acetaminophen and minoxidil. Mediates also the metabolic activation of carcinogenic N-hydroxyarylamines leading to highly reactive intermediates capable of forming DNA adducts, potentially resulting in mutagenesis. May play a role in gut microbiota-host metabolic interaction. O-sulfonates 4-ethylphenol (4-EP), a dietary tyrosine-derived metabolite produced by gut bacteria. The product 4-EPS crosses the blood-brain barrier and may negatively regulate oligodendrocyte maturation and myelination, affecting the functional connectivity of different brain regions associated with the limbic system. Catalyzes the sulfate conjugation of dopamine. Catalyzes the sulfation of T4 (L-thyroxine/3,5,3',5'-tetraiodothyronine), T3 (3,5,3'-triiodothyronine), rT3 (3,3',5'-triiodothyronine) and 3,3'-T2 (3,3'-diiodothyronine), with a substrate preference of 3,3'-T2 &gt; rT3 &gt; T3 &gt; T4. The polypeptide is Sulfotransferase 1A1 (SULT1A1) (Homo sapiens (Human)).